Consider the following 239-residue polypeptide: Ubiquinone biosynthesis O-methyltransferase (239 aa).

Positions 42, 62, 83, and 127 each coordinate S-adenosyl-L-methionine.

It belongs to the methyltransferase superfamily. UbiG/COQ3 family.

The catalysed reaction is a 3-demethylubiquinol + S-adenosyl-L-methionine = a ubiquinol + S-adenosyl-L-homocysteine + H(+). It carries out the reaction a 3-(all-trans-polyprenyl)benzene-1,2-diol + S-adenosyl-L-methionine = a 2-methoxy-6-(all-trans-polyprenyl)phenol + S-adenosyl-L-homocysteine + H(+). It participates in cofactor biosynthesis; ubiquinone biosynthesis. Functionally, O-methyltransferase that catalyzes the 2 O-methylation steps in the ubiquinone biosynthetic pathway. The protein is Ubiquinone biosynthesis O-methyltransferase of Pectobacterium carotovorum subsp. carotovorum (strain PC1).